The sequence spans 169 residues: Protein HIGH ARSENIC CONTENT 1, mitochondrial (169 aa).

The N-terminal 59 residues, 1–59 (MYTYSLLNLSHCRRQTRKKRKTDHTEGFLMEETKPKTVEDVETVDVYTAKGFLSTGHRY), are a transit peptide targeting the mitochondrion. The 94-residue stretch at 60–153 (LDVRTNEEFA…WVDAGFAGDK (94 aa)) folds into the Rhodanese domain. The active-site Cysteine persulfide intermediate is the cysteine 113.

In terms of tissue distribution, expressed in root hairs, epidermal cells at the surface of the root and in the pericycle within the stele.

It is found in the mitochondrion. The enzyme catalyses [glutaredoxin]-dithiol + arsenate + glutathione + H(+) = glutathionyl-S-S-[glutaredoxin] + arsenite + H2O. Inhibited by trobenzenesulphonic acid (TNBS). Functionally, arsenate reductase critical for arsenic tolerance. Reduces arsenate to arsenite in the root, facilitating efflux of arsenic back into the soil to limit both its accumulation in the root and transport to the shoot. Essential for arsenite efflux from the root, but not necessary for arsenate uptake. The polypeptide is Protein HIGH ARSENIC CONTENT 1, mitochondrial (Arabidopsis thaliana (Mouse-ear cress)).